The following is a 262-amino-acid chain: NAD-dependent glucose-6-phosphate dehydrogenase (262 aa).

The NAD(+) site is built by Asn90, Ser115, Tyr152, and Lys156. Tyr152 acts as the Proton acceptor in catalysis.

The protein belongs to the NAD(P)-dependent epimerase/dehydratase family. Homodimer.

The enzyme catalyses D-glucose 6-phosphate + NAD(+) = 6-phospho-D-glucono-1,5-lactone + NADH + H(+). It functions in the pathway carbohydrate degradation; pentose phosphate pathway. Catalyzes the NAD-dependent oxidation of glucose 6-phosphate to 6-phosphogluconolactone. This chain is NAD-dependent glucose-6-phosphate dehydrogenase, found in Haloferax volcanii (strain ATCC 29605 / DSM 3757 / JCM 8879 / NBRC 14742 / NCIMB 2012 / VKM B-1768 / DS2) (Halobacterium volcanii).